We begin with the raw amino-acid sequence, 357 residues long: Peptide chain release factor 1 (357 aa).

Gln235 is subject to N5-methylglutamine. Residues 282–294 show a composition bias toward basic and acidic residues; sequence RQKADTERSESRR. The tract at residues 282–308 is disordered; that stretch reads RQKADTERSESRRSQVGSGDRSERIRT.

It belongs to the prokaryotic/mitochondrial release factor family. Post-translationally, methylated by PrmC. Methylation increases the termination efficiency of RF1.

Its subcellular location is the cytoplasm. Peptide chain release factor 1 directs the termination of translation in response to the peptide chain termination codons UAG and UAA. This is Peptide chain release factor 1 from Brucella anthropi (strain ATCC 49188 / DSM 6882 / CCUG 24695 / JCM 21032 / LMG 3331 / NBRC 15819 / NCTC 12168 / Alc 37) (Ochrobactrum anthropi).